Here is a 209-residue protein sequence, read N- to C-terminus: Peptide deformylase 2 (209 aa).

Fe cation contacts are provided by cysteine 101 and histidine 149. Glutamate 150 is an active-site residue. Residue histidine 153 participates in Fe cation binding.

Belongs to the polypeptide deformylase family. It depends on Fe(2+) as a cofactor.

It catalyses the reaction N-terminal N-formyl-L-methionyl-[peptide] + H2O = N-terminal L-methionyl-[peptide] + formate. Functionally, removes the formyl group from the N-terminal Met of newly synthesized proteins. Requires at least a dipeptide for an efficient rate of reaction. N-terminal L-methionine is a prerequisite for activity but the enzyme has broad specificity at other positions. The polypeptide is Peptide deformylase 2 (Coxiella burnetii (strain RSA 493 / Nine Mile phase I)).